The chain runs to 223 residues: Trichome differentiation protein GL1 (223 aa).

HTH myb-type domains are found at residues 11–63 (NQEY…MNYL) and 64–118 (SPNV…SKKL). 2 consecutive DNA-binding regions (H-T-H motif) follow at residues 39-63 (WNRI…MNYL) and 91-114 (WSLI…NTHL).

It is found in the nucleus. Its function is as follows. Regulates the production of a signal that induces hair (trichome) precursor cells on leaf primordia to differentiate. This is Trichome differentiation protein GL1 (GL1) from Arabidopsis lyrata (Lyre-leaved rock-cress).